A 408-amino-acid polypeptide reads, in one-letter code: Inhibin beta B chain (408 aa).

The signal sequence occupies residues 1–28 (MDGLPGRALGAACLLMLAVGSLGPGVWG). A disordered region spans residues 29–60 (SPTPPPLPAAPQPPPPPPGAPGGSQDTCTSCG). A propeptide spanning residues 29–293 (SPTPPPLPAA…GDSRHRIRKR (265 aa)) is cleaved from the precursor. Residues 30–48 (PTPPPLPAAPQPPPPPPGA) are compositionally biased toward pro residues. N-linked (GlcNAc...) asparagine glycosylation occurs at N94. 4 cysteine pairs are disulfide-bonded: C297–C305, C304–C373, C333–C405, and C337–C407.

It belongs to the TGF-beta family. Dimeric, linked by one or more disulfide bonds. Inhibin B is a dimer of alpha and beta-B. Activin B is a homodimer of beta-B. Activin AB is a dimer of beta-A and beta-B. Interacts with FST and FSTL3.

It is found in the secreted. Its function is as follows. Inhibins and activins inhibit and activate, respectively, the secretion of follitropin by the pituitary gland. Inhibins/activins are involved in regulating a number of diverse functions such as hypothalamic and pituitary hormone secretion, gonadal hormone secretion, germ cell development and maturation, erythroid differentiation, insulin secretion, nerve cell survival, embryonic axial development or bone growth, depending on their subunit composition. Inhibins appear to oppose the functions of activins. In terms of biological role, activin B is a dimer of alpha and beta-B that plays a role in several essential biological processes including embryonic development, stem cell maintenance and differentiation, haematopoiesis, cell proliferation and wound healing. Signals through type I receptor ACVR1C, abundantly expressed in pancreatic beta cells, and type II receptors like ACVR2A. Upon ligand binding, these receptors phosphorylate intracellular signaling mediators SMAD2 and SMAD3, which form a complex with SMAD4, translocate to the nucleus, and regulate gene expression. Plays a crucial role in the induction of hepcidin by inflammation through activation of ACVR1C and subsequent phosphorylation of SMAD1/5/8. Regulates adipocyte lipid metabolism by decreasing non-esterified fatty acids and glycerol release and increases intracellular triglyceride content. Stimulates wound healing by promoting cell migration and hair follicle regeneration through the JNK and ERK signaling pathways downstream of RHOA. Functionally, inhibin B is a dimer of alpha and beta-B that plays a crucial role in the regulation of the reproductive system by inhibiting the secretion of follicle-stimulating hormone (FSH) from the anterior pituitary gland. Thereby, maintains reproductive homeostasis in both males and females. Acts as a more potent suppressor of FSH release than inhibin A. Functions as competitive receptor antagonist binding activin type II receptors with high affinity in the presence of the TGF-beta type III coreceptor/TGFBR3L. In Bos taurus (Bovine), this protein is Inhibin beta B chain (INHBB).